The primary structure comprises 65 residues: Large ribosomal subunit protein bL35 (65 aa).

Belongs to the bacterial ribosomal protein bL35 family.

This is Large ribosomal subunit protein bL35 from Buchnera aphidicola subsp. Acyrthosiphon pisum (strain 5A).